We begin with the raw amino-acid sequence, 421 residues long: Mitochondrial distribution and morphology protein 10 (421 aa).

It belongs to the MDM10 family. Component of the ER-mitochondria encounter structure (ERMES) or MDM complex, composed of MMM1, MDM10, MDM12 and MDM34. Associates with the mitochondrial outer membrane sorting assembly machinery SAM(core) complex.

The protein localises to the mitochondrion outer membrane. Its function is as follows. Component of the ERMES/MDM complex, which serves as a molecular tether to connect the endoplasmic reticulum and mitochondria. Components of this complex are involved in the control of mitochondrial shape and protein biogenesis and may function in phospholipid exchange. MDM10 is involved in the late assembly steps of the general translocase of the mitochondrial outer membrane (TOM complex). Functions in the TOM40-specific route of the assembly of outer membrane beta-barrel proteins, including the association of TOM40 with the receptor TOM22 and small TOM proteins. Can associate with the SAM(core) complex as well as the MDM12-MMM1 complex, both involved in late steps of the major beta-barrel assembly pathway, that is responsible for biogenesis of all outer membrane beta-barrel proteins. May act as a switch that shuttles between both complexes and channels precursor proteins into the TOM40-specific pathway. Plays a role in mitochondrial morphology and in the inheritance of mitochondria. The protein is Mitochondrial distribution and morphology protein 10 of Vanderwaltozyma polyspora (strain ATCC 22028 / DSM 70294 / BCRC 21397 / CBS 2163 / NBRC 10782 / NRRL Y-8283 / UCD 57-17) (Kluyveromyces polysporus).